The chain runs to 258 residues: Coiled-coil domain-containing protein 107 (258 aa).

The N-terminal stretch at 1-24 (MASVVSLAGTLGLLLVSALPEVLG) is a signal peptide. Positions 25–35 (DRRSPDRRAHP) are enriched in basic and acidic residues. The disordered stretch occupies residues 25 to 63 (DRRSPDRRAHPGDAGQVGPAAAEPRRQSPPSKNQRERAR). The helical transmembrane segment at 66–86 (ALPLGALYTAAAVAFVLYKCL) threads the bilayer. Residues 106–134 (LQSEQHLAQLTQQLVQTEQHLNSLMAQLD) are a coiled coil. Residues 203-222 (EPLNWNTGTRNLTPPREMQP) are disordered.

The protein localises to the membrane. This Bos taurus (Bovine) protein is Coiled-coil domain-containing protein 107 (CCDC107).